Consider the following 105-residue polypeptide: Small ribosomal subunit protein uS17 (105 aa).

The protein belongs to the universal ribosomal protein uS17 family. As to quaternary structure, part of the 30S ribosomal subunit. Contacts protein S12.

Its function is as follows. One of the primary rRNA binding proteins, it binds directly to 16S rRNA where it helps nucleate assembly of the platform and body of the 30S subunit by bringing together and stabilizing interactions between several different RNA helices. The combined cluster of proteins S8, S12 and S17 appears to hold together the shoulder and platform of the 30S subunit. The chain is Small ribosomal subunit protein uS17 from Thermus thermophilus (strain ATCC 27634 / DSM 579 / HB8).